The following is a 356-amino-acid chain: UDP-N-acetylglucosamine--N-acetylmuramyl-(pentapeptide) pyrophosphoryl-undecaprenol N-acetylglucosamine transferase (356 aa).

Residues 11–13, Asn117, Arg160, Ser188, and Gln290 each bind UDP-N-acetyl-alpha-D-glucosamine; that span reads TGG.

It belongs to the glycosyltransferase 28 family. MurG subfamily.

The protein localises to the cell inner membrane. The catalysed reaction is di-trans,octa-cis-undecaprenyl diphospho-N-acetyl-alpha-D-muramoyl-L-alanyl-D-glutamyl-meso-2,6-diaminopimeloyl-D-alanyl-D-alanine + UDP-N-acetyl-alpha-D-glucosamine = di-trans,octa-cis-undecaprenyl diphospho-[N-acetyl-alpha-D-glucosaminyl-(1-&gt;4)]-N-acetyl-alpha-D-muramoyl-L-alanyl-D-glutamyl-meso-2,6-diaminopimeloyl-D-alanyl-D-alanine + UDP + H(+). It participates in cell wall biogenesis; peptidoglycan biosynthesis. In terms of biological role, cell wall formation. Catalyzes the transfer of a GlcNAc subunit on undecaprenyl-pyrophosphoryl-MurNAc-pentapeptide (lipid intermediate I) to form undecaprenyl-pyrophosphoryl-MurNAc-(pentapeptide)GlcNAc (lipid intermediate II). The protein is UDP-N-acetylglucosamine--N-acetylmuramyl-(pentapeptide) pyrophosphoryl-undecaprenol N-acetylglucosamine transferase of Rickettsia bellii (strain RML369-C).